Reading from the N-terminus, the 353-residue chain is Sphingosine 1-phosphate receptor 2 (353 aa).

Residues 1 to 34 (MGSLYSEYLNPNKVQEHYNYTKETLETQETTSRQ) lie on the Extracellular side of the membrane. Residue asparagine 19 is glycosylated (N-linked (GlcNAc...) asparagine). The chain crosses the membrane as a helical span at residues 35–59 (VASAFIVILCCAIVVENLLVLIAVA). At 60–66 (RNSKFHS) the chain is on the cytoplasmic side. Residues 67 to 95 (AMYLFLGNLAASDLLAGVAFVANTLLSGS) form a helical membrane-spanning segment. The Extracellular segment spans residues 96–109 (VTLRLTPVQWFARE). A helical membrane pass occupies residues 110-128 (GSAFITLSASVFSLLAIAI). Residues 129–147 (ERHVAIAKVKLYGSDKSCR) lie on the Cytoplasmic side of the membrane. The chain crosses the membrane as a helical span at residues 148 to 173 (MLLLIGASWLISLVLGGLPILGWNCL). The Extracellular segment spans residues 174–189 (GHLEACSTVLPLYAKH). A helical transmembrane segment spans residues 190–210 (YVLCVVTIFSIILLAIVALYV). The Cytoplasmic portion of the chain corresponds to 211–233 (RIYCVVRSSHADMAAPQTLALLK). Residues 234–255 (TVTIVLGVFIVCWLPAFSILLL) traverse the membrane as a helical segment. The Extracellular segment spans residues 256–271 (DYACPVHSCPILYKAH). A helical membrane pass occupies residues 272–292 (YFFAVSTLNSLLNPVIYTWRS). Residues 293-353 (RDLRREVLRP…PTFLEGNTVV (61 aa)) lie on the Cytoplasmic side of the membrane. Cysteine 305 carries the S-palmitoyl cysteine lipid modification.

It belongs to the G-protein coupled receptor 1 family.

The protein localises to the cell membrane. Functionally, receptor for the lysosphingolipid sphingosine 1-phosphate (S1P). S1P is a bioactive lysophospholipid that elicits diverse physiological effects on most types of cells and tissues. When expressed in rat HTC4 hepatoma cells, is capable of mediating S1P-induced cell proliferation and suppression of apoptosis. Receptor for the chemokine-like protein FAM19A5. Mediates the inhibitory effect of FAM19A5 on vascular smooth muscle cell proliferation and migration. In lymphoid follicles, couples the binding of S1P to the activation of GNA13 and downstream inhibition of AKT activation leading to suppression of germinal center (GC) B cell growth and migration outside the GC niche. The polypeptide is Sphingosine 1-phosphate receptor 2 (S1PR2) (Homo sapiens (Human)).